The primary structure comprises 281 residues: Putative glutamine amidotransferase-like protein RP404 (281 aa).

The region spanning lysine 19–isoleucine 281 is the Glutamine amidotransferase type-1 domain. The region spanning arginine 139–proline 174 is the RPE1 insert domain.

This Rickettsia prowazekii (strain Madrid E) protein is Putative glutamine amidotransferase-like protein RP404.